Reading from the N-terminus, the 173-residue chain is Photosystem I assembly protein Ycf3 (173 aa).

3 TPR repeats span residues 35-68, 72-105, and 120-153; these read AFAY…EEDP, AFIL…NAKM, and GSIA…APNN.

Belongs to the Ycf3 family.

It is found in the cellular thylakoid membrane. Functionally, essential for the assembly of the photosystem I (PSI) complex. May act as a chaperone-like factor to guide the assembly of the PSI subunits. The protein is Photosystem I assembly protein Ycf3 of Synechococcus sp. (strain RCC307).